We begin with the raw amino-acid sequence, 61 residues long: Small ribosomal subunit protein bS21 (61 aa).

The tract at residues 36-61 (EHYESPSVKRKKKAEAARKRKYKYGR) is disordered. Positions 43–61 (VKRKKKAEAARKRKYKYGR) are enriched in basic residues.

This sequence belongs to the bacterial ribosomal protein bS21 family.

This is Small ribosomal subunit protein bS21 (rpsU) from Caldanaerobacter subterraneus subsp. tengcongensis (strain DSM 15242 / JCM 11007 / NBRC 100824 / MB4) (Thermoanaerobacter tengcongensis).